A 139-amino-acid polypeptide reads, in one-letter code: ATP synthase epsilon chain (139 aa).

This sequence belongs to the ATPase epsilon chain family. In terms of assembly, F-type ATPases have 2 components, CF(1) - the catalytic core - and CF(0) - the membrane proton channel. CF(1) has five subunits: alpha(3), beta(3), gamma(1), delta(1), epsilon(1). CF(0) has three main subunits: a, b and c.

The protein localises to the cell inner membrane. In terms of biological role, produces ATP from ADP in the presence of a proton gradient across the membrane. The sequence is that of ATP synthase epsilon chain from Pseudomonas putida (strain W619).